The following is a 277-amino-acid chain: 2-dehydro-3-deoxyphosphooctonate aldolase (277 aa).

Belongs to the KdsA family.

It localises to the cytoplasm. It catalyses the reaction D-arabinose 5-phosphate + phosphoenolpyruvate + H2O = 3-deoxy-alpha-D-manno-2-octulosonate-8-phosphate + phosphate. It participates in carbohydrate biosynthesis; 3-deoxy-D-manno-octulosonate biosynthesis; 3-deoxy-D-manno-octulosonate from D-ribulose 5-phosphate: step 2/3. Its pathway is bacterial outer membrane biogenesis; lipopolysaccharide biosynthesis. This chain is 2-dehydro-3-deoxyphosphooctonate aldolase, found in Brucella canis (strain ATCC 23365 / NCTC 10854 / RM-666).